The chain runs to 558 residues: Factor VII-activating protease (558 aa).

The N-terminal stretch at methionine 1–glycine 23 is a signal peptide. EGF-like domains are found at residues aspartate 71–glutamine 107, alanine 109–serine 146, and valine 148–glutamate 186. 18 disulfide bridges follow: cysteine 75–cysteine 86, cysteine 80–cysteine 95, cysteine 97–cysteine 106, cysteine 113–cysteine 123, cysteine 118–cysteine 134, cysteine 136–cysteine 145, cysteine 152–cysteine 163, cysteine 157–cysteine 174, cysteine 176–cysteine 185, cysteine 192–cysteine 274, cysteine 213–cysteine 255, cysteine 244–cysteine 269, cysteine 299–cysteine 433, cysteine 345–cysteine 361, cysteine 353–cysteine 422, cysteine 445–cysteine 513, cysteine 475–cysteine 491, and cysteine 503–cysteine 531. One can recognise a Kringle domain in the interval aspartate 191–cysteine 274. Residues isoleucine 312–histidine 553 enclose the Peptidase S1 domain. Residues histidine 360 and aspartate 409 each act as charge relay system in the active site. The active-site Charge relay system is serine 507.

Belongs to the peptidase S1 family. As to quaternary structure, heterodimer; disulfide-linked. Heterodimer of a 50 kDa heavy and a 27 kDa light chain linked by a disulfide bond. In terms of processing, proteolytic cleavage at Gly-23 or Met-27 can give rise to the 50 kDa heavy chain (HC) and cleavage at Arg-311 or Lys-317 can give rise to the 27 kDa light chain (LC). The HC can undergo further proteolytic cleavage giving rise to a 26 kDa fragment. The LC can undergo further proteolytic cleavage at Arg-311 leading to a 17-kDa fragment and at Arg-478 leading to a 8-kDa fragment. In terms of tissue distribution, liver and kidney.

The protein localises to the secreted. Its function is as follows. Cleaves the alpha-chain at multiple sites and the beta-chain between 'Lys-53' and 'Lys-54' but not the gamma-chain of fibrinogen and therefore does not initiate the formation of the fibrin clot and does not cause the fibrinolysis directly. It does not cleave (activate) prothrombin and plasminogen but converts the inactive single chain urinary plasminogen activator (pro-urokinase) to the active two chain form. Activates coagulation factor VII. May function as a tumor suppressor negatively regulating cell proliferation and cell migration. The polypeptide is Factor VII-activating protease (Mus musculus (Mouse)).